A 354-amino-acid polypeptide reads, in one-letter code: Holliday junction branch migration complex subunit RuvB (354 aa).

A disordered region spans residues 1–22; it reads MTLQTDDFAPAPARRVVSAAPA. The interval 5 to 194 is large ATPase domain (RuvB-L); that stretch reads TDDFAPAPAR…FGIVARLEFY (190 aa). Positions 9–22 are enriched in low complexity; sequence APAPARRVVSAAPA. ATP is bound by residues L33, R34, G75, K78, T79, T80, 141–143, R184, Y194, and R231; that span reads EDY. T79 is a binding site for Mg(2+). Positions 195–265 are small ATPAse domain (RuvB-S); the sequence is SAQELARIVK…IAERALAMLD (71 aa). The tract at residues 268 to 354 is head domain (RuvB-H); sequence PEGLDVMDRK…GAQAPGLFAV (87 aa). Residues R323 and R328 each coordinate DNA.

It belongs to the RuvB family. As to quaternary structure, homohexamer. Forms an RuvA(8)-RuvB(12)-Holliday junction (HJ) complex. HJ DNA is sandwiched between 2 RuvA tetramers; dsDNA enters through RuvA and exits via RuvB. An RuvB hexamer assembles on each DNA strand where it exits the tetramer. Each RuvB hexamer is contacted by two RuvA subunits (via domain III) on 2 adjacent RuvB subunits; this complex drives branch migration. In the full resolvosome a probable DNA-RuvA(4)-RuvB(12)-RuvC(2) complex forms which resolves the HJ.

The protein localises to the cytoplasm. It catalyses the reaction ATP + H2O = ADP + phosphate + H(+). Its function is as follows. The RuvA-RuvB-RuvC complex processes Holliday junction (HJ) DNA during genetic recombination and DNA repair, while the RuvA-RuvB complex plays an important role in the rescue of blocked DNA replication forks via replication fork reversal (RFR). RuvA specifically binds to HJ cruciform DNA, conferring on it an open structure. The RuvB hexamer acts as an ATP-dependent pump, pulling dsDNA into and through the RuvAB complex. RuvB forms 2 homohexamers on either side of HJ DNA bound by 1 or 2 RuvA tetramers; 4 subunits per hexamer contact DNA at a time. Coordinated motions by a converter formed by DNA-disengaged RuvB subunits stimulates ATP hydrolysis and nucleotide exchange. Immobilization of the converter enables RuvB to convert the ATP-contained energy into a lever motion, pulling 2 nucleotides of DNA out of the RuvA tetramer per ATP hydrolyzed, thus driving DNA branch migration. The RuvB motors rotate together with the DNA substrate, which together with the progressing nucleotide cycle form the mechanistic basis for DNA recombination by continuous HJ branch migration. Branch migration allows RuvC to scan DNA until it finds its consensus sequence, where it cleaves and resolves cruciform DNA. The protein is Holliday junction branch migration complex subunit RuvB of Verminephrobacter eiseniae (strain EF01-2).